Here is a 308-residue protein sequence, read N- to C-terminus: tRNA pseudouridine synthase B (308 aa).

D46 acts as the Nucleophile in catalysis.

It belongs to the pseudouridine synthase TruB family. Type 1 subfamily.

It carries out the reaction uridine(55) in tRNA = pseudouridine(55) in tRNA. In terms of biological role, responsible for synthesis of pseudouridine from uracil-55 in the psi GC loop of transfer RNAs. In Marinomonas sp. (strain MWYL1), this protein is tRNA pseudouridine synthase B.